Here is a 263-residue protein sequence, read N- to C-terminus: Shikimate dehydrogenase (NADP(+)) (263 aa).

Shikimate-binding positions include 14–16 and Thr-60; that span reads SLS. Residue Lys-64 is the Proton acceptor of the active site. Asn-85 and Asp-100 together coordinate shikimate. NADP(+)-binding positions include 123 to 127, 146 to 151, and Leu-205; these read GAGGA and NRTPQR. Residue Tyr-207 coordinates shikimate. Residue Gly-228 participates in NADP(+) binding. Position 235 (Gln-235) interacts with shikimate.

Belongs to the shikimate dehydrogenase family. As to quaternary structure, homodimer.

The catalysed reaction is shikimate + NADP(+) = 3-dehydroshikimate + NADPH + H(+). The protein operates within metabolic intermediate biosynthesis; chorismate biosynthesis; chorismate from D-erythrose 4-phosphate and phosphoenolpyruvate: step 4/7. Functionally, involved in the biosynthesis of the chorismate, which leads to the biosynthesis of aromatic amino acids. Catalyzes the reversible NADPH linked reduction of 3-dehydroshikimate (DHSA) to yield shikimate (SA). The protein is Shikimate dehydrogenase (NADP(+)) of Thermus thermophilus (strain ATCC 27634 / DSM 579 / HB8).